The primary structure comprises 388 residues: MTSSHAMNITPLAQLALLFSTLLLPGTQALLAPTTPDAGSALNLTFDPWTRTLTWACDTAAGNVTVTSCTVTSREAGIHRRVSPFGCRCWFRRMMALHHGVTLDVNGTVGGAAAHWRLSFVNEGAAGSGAENLTCEIRAARFLSCAWREGPAAPADVRYSLRVLNSTGHDVARCMADPGDDVITQCIANDLSLLGSEAYLVVTGRSGAGPVRFLDDVVATKALERLGPPRDVTASCNSSHCTVSWAPPSTWASLTARDFQFEVQWQSAEPGSTPRKVLVVEETRLAFPSPAPHGGHKVKVRAGDTRMKHWGEWSPAHPLEAEDTRVPGALLYAVTACAVLLCALALGVTCRRFEVTRRLFPPIPGIRDKVSDDVRVNPETLRKDLLQP.

The first 29 residues, 1–29 (MTSSHAMNITPLAQLALLFSTLLLPGTQA), serve as a signal peptide directing secretion. Residues 30–327 (LLAPTTPDAG…PLEAEDTRVP (298 aa)) are Extracellular-facing. N-linked (GlcNAc...) asparagine glycans are attached at residues Asn-43, Asn-63, Asn-106, Asn-132, Asn-165, and Asn-237. The Fibronectin type-III domain occupies 228–324 (PPRDVTASCN…PAHPLEAEDT (97 aa)). Residues 310-314 (WGEWS) carry the WSXWS motif motif. The chain crosses the membrane as a helical span at residues 328-348 (GALLYAVTACAVLLCALALGV). At 349–388 (TCRRFEVTRRLFPPIPGIRDKVSDDVRVNPETLRKDLLQP) the chain is on the cytoplasmic side. The Box 1 motif motif lies at 359–367 (LFPPIPGIR).

It belongs to the type I cytokine receptor family. Type 5 subfamily. Heterodimer of an alpha and a beta subunit. The beta subunit is common to the IL3, IL5 and GM-CSF receptors. The signaling GM-CSF receptor complex is a dodecamer of two head-to-head hexamers of two alpha, two beta, and two ligand subunits.

It is found in the membrane. Its function is as follows. Low affinity receptor for granulocyte-macrophage colony-stimulating factor. Transduces a signal that results in the proliferation, differentiation, and functional activation of hematopoietic cells. The chain is Granulocyte-macrophage colony-stimulating factor receptor subunit alpha (Csf2ra) from Mus musculus (Mouse).